The sequence spans 379 residues: LIM/homeobox protein Lhx9 (379 aa).

LIM zinc-binding domains are found at residues 51-112 and 113-175; these read TLCA…RFSV and QRCA…LVQG. Disordered regions lie at residues 232-257 and 310-379; these read ENDT…TSFK and RQEN…TNLF. A compositionally biased stretch (basic residues) spans 248 to 257; that stretch reads KTKRMRTSFK. The segment at residues 249 to 308 is a DNA-binding region (homeobox); it reads TKRMRTSFKHHQLRTTKSYFAINHNPDAKDLKQLAQKTGLTKRVLQVWFQNARAKFRRNL. Positions 326 to 379 are enriched in polar residues; sequence APASTDSAALTPTGAASTLSDLTSPSLNVGASVTPNMDSHESGSPSQTTLTNLF.

In terms of tissue distribution, isoform 1 and isoform 3 are expressed in ovary, testis, brain and heart. Isoform 4 and isoform 5 are expressed in brain.

The protein localises to the nucleus. Its function is as follows. May be involved in gonadal development. This Glandirana rugosa (Japanese wrinkled frog) protein is LIM/homeobox protein Lhx9 (lhx9).